Reading from the N-terminus, the 443-residue chain is Trigger factor (443 aa).

Positions 164–249 constitute a PPIase FKBP-type domain; that stretch reads GDVLCVDFVG…AKSLKKAVDP (86 aa).

The protein belongs to the FKBP-type PPIase family. Tig subfamily.

It localises to the cytoplasm. It catalyses the reaction [protein]-peptidylproline (omega=180) = [protein]-peptidylproline (omega=0). In terms of biological role, involved in protein export. Acts as a chaperone by maintaining the newly synthesized protein in an open conformation. Functions as a peptidyl-prolyl cis-trans isomerase. The sequence is that of Trigger factor from Gluconobacter oxydans (strain 621H) (Gluconobacter suboxydans).